A 446-amino-acid polypeptide reads, in one-letter code: Ribosomal protein uS12 methylthiotransferase RimO (446 aa).

An MTTase N-terminal domain is found at 9–121; it reads PKVGFVSLGC…VLDAIHAALP (113 aa). 6 residues coordinate [4Fe-4S] cluster: Cys-18, Cys-54, Cys-83, Cys-152, Cys-156, and Cys-159. Residues 138 to 375 form the Radical SAM core domain; the sequence is LTPPHYAYLK…MAVQEAISRQ (238 aa). The TRAM domain occupies 378 to 445; the sequence is QRRVGQRQRV…AHDLYGMVVS (68 aa).

The protein belongs to the methylthiotransferase family. RimO subfamily. [4Fe-4S] cluster serves as cofactor.

It is found in the cytoplasm. The catalysed reaction is L-aspartate(89)-[ribosomal protein uS12]-hydrogen + (sulfur carrier)-SH + AH2 + 2 S-adenosyl-L-methionine = 3-methylsulfanyl-L-aspartate(89)-[ribosomal protein uS12]-hydrogen + (sulfur carrier)-H + 5'-deoxyadenosine + L-methionine + A + S-adenosyl-L-homocysteine + 2 H(+). In terms of biological role, catalyzes the methylthiolation of an aspartic acid residue of ribosomal protein uS12. In Acidithiobacillus ferrooxidans (strain ATCC 23270 / DSM 14882 / CIP 104768 / NCIMB 8455) (Ferrobacillus ferrooxidans (strain ATCC 23270)), this protein is Ribosomal protein uS12 methylthiotransferase RimO.